The chain runs to 420 residues: Gamma-glutamyl phosphate reductase (420 aa).

It belongs to the gamma-glutamyl phosphate reductase family.

It localises to the cytoplasm. It carries out the reaction L-glutamate 5-semialdehyde + phosphate + NADP(+) = L-glutamyl 5-phosphate + NADPH + H(+). It functions in the pathway amino-acid biosynthesis; L-proline biosynthesis; L-glutamate 5-semialdehyde from L-glutamate: step 2/2. In terms of biological role, catalyzes the NADPH-dependent reduction of L-glutamate 5-phosphate into L-glutamate 5-semialdehyde and phosphate. The product spontaneously undergoes cyclization to form 1-pyrroline-5-carboxylate. The polypeptide is Gamma-glutamyl phosphate reductase (Streptococcus pneumoniae (strain Hungary19A-6)).